The sequence spans 142 residues: gSG7 salivary protein (142 aa).

The first 26 residues, 1–26 (MAARMTIMLPLAVALICLLQTEPGMA), serve as a signal peptide directing secretion. Cystine bridges form between Cys-84-Cys-139 and Cys-107-Cys-117.

It localises to the secreted. Salivary protein that moderately inhibits the alternative pathway for complement system activation in the host. This chain is gSG7 salivary protein, found in Anopheles darlingi (Mosquito).